The primary structure comprises 41 residues: Bacteriocin (41 aa).

Residues cysteine 9 and cysteine 14 are joined by a disulfide bond.

Its subcellular location is the secreted. Bacteriocin active against S.aureus, S.typhi, B.thuringiensis, Klebsiella sp., E.coli KL16 and E.coli Gj137. In Lactococcus sp, this protein is Bacteriocin.